The sequence spans 302 residues: Quinolinate synthase (302 aa).

Iminosuccinate-binding residues include His24 and Ser41. Cys86 provides a ligand contact to [4Fe-4S] cluster. Iminosuccinate contacts are provided by residues 112 to 114 and Ser129; that span reads YVN. Cys171 contacts [4Fe-4S] cluster. Residues 197–199 and Thr214 each bind iminosuccinate; that span reads HPE. Position 259 (Cys259) interacts with [4Fe-4S] cluster.

This sequence belongs to the quinolinate synthase family. Type 2 subfamily. Requires [4Fe-4S] cluster as cofactor.

It is found in the cytoplasm. The catalysed reaction is iminosuccinate + dihydroxyacetone phosphate = quinolinate + phosphate + 2 H2O + H(+). Its pathway is cofactor biosynthesis; NAD(+) biosynthesis; quinolinate from iminoaspartate: step 1/1. In terms of biological role, catalyzes the condensation of iminoaspartate with dihydroxyacetone phosphate to form quinolinate. In Dehalococcoides mccartyi (strain CBDB1), this protein is Quinolinate synthase.